A 212-amino-acid polypeptide reads, in one-letter code: Large ribosomal subunit protein uL4 (212 aa).

A compositionally biased stretch (polar residues) spans 54-65; the sequence is SQKSRSDVSGSN. The interval 54–85 is disordered; it reads SQKSRSDVSGSNKKPWRQKGTGRARSGSVKSP.

This sequence belongs to the universal ribosomal protein uL4 family. As to quaternary structure, part of the 50S ribosomal subunit.

One of the primary rRNA binding proteins, this protein initially binds near the 5'-end of the 23S rRNA. It is important during the early stages of 50S assembly. It makes multiple contacts with different domains of the 23S rRNA in the assembled 50S subunit and ribosome. Its function is as follows. Forms part of the polypeptide exit tunnel. The sequence is that of Large ribosomal subunit protein uL4 from Blochmanniella floridana.